The sequence spans 564 residues: Major facilitator superfamily transporter MPN_076 (564 aa).

12 helical membrane passes run 1 to 21 (MLWA…FVID), 65 to 85 (ITLL…KFGY), 89 to 109 (VMIM…GDPL), 176 to 196 (IAGY…GTTL), 220 to 240 (NLWG…FQSV), 249 to 269 (VFIL…FAWF), 306 to 326 (MIGM…GGWW), 358 to 378 (AGLP…YMVF), 404 to 424 (IVIV…FAFV), 425 to 445 (AIAT…ILIL), 457 to 477 (VSVL…AFDI), and 501 to 521 (GAIA…AIVV).

It belongs to the major facilitator superfamily.

It localises to the cell membrane. In Mycoplasma pneumoniae (strain ATCC 29342 / M129 / Subtype 1) (Mycoplasmoides pneumoniae), this protein is Major facilitator superfamily transporter MPN_076.